Consider the following 209-residue polypeptide: Large ribosomal subunit protein uL3 (209 aa).

The tract at residues 144-165 (GSMGAASDPSRTFKNKKMPGHM) is disordered.

It belongs to the universal ribosomal protein uL3 family. Part of the 50S ribosomal subunit. Forms a cluster with proteins L14 and L19.

One of the primary rRNA binding proteins, it binds directly near the 3'-end of the 23S rRNA, where it nucleates assembly of the 50S subunit. This is Large ribosomal subunit protein uL3 from Clostridium novyi (strain NT).